Reading from the N-terminus, the 597-residue chain is UvrABC system protein C (597 aa).

The GIY-YIG domain occupies 15 to 93; it reads NSPGVYQYFD…IKKHQPRFNV (79 aa). The region spanning 207-242 is the UVR domain; sequence KDSLQRFRNQMKQHSEKMEFEDAQRIKNKIDVLENY.

Belongs to the UvrC family. In terms of assembly, interacts with UvrB in an incision complex.

The protein resides in the cytoplasm. Functionally, the UvrABC repair system catalyzes the recognition and processing of DNA lesions. UvrC both incises the 5' and 3' sides of the lesion. The N-terminal half is responsible for the 3' incision and the C-terminal half is responsible for the 5' incision. In Christiangramia forsetii (strain DSM 17595 / CGMCC 1.15422 / KT0803) (Gramella forsetii), this protein is UvrABC system protein C.